The sequence spans 323 residues: Methenyltetrahydromethanopterin cyclohydrolase (323 aa).

It belongs to the MCH family.

The protein localises to the cytoplasm. The enzyme catalyses 5,10-methenyl-5,6,7,8-tetrahydromethanopterin + H2O = N(5)-formyl-5,6,7,8-tetrahydromethanopterin + H(+). It participates in one-carbon metabolism; methanogenesis from CO(2); 5,10-methenyl-5,6,7,8-tetrahydromethanopterin from CO(2): step 3/3. Functionally, catalyzes the reversible interconversion of 5-formyl-H(4)MPT to methenyl-H(4)MPT(+). This Methanococcus maripaludis (strain C5 / ATCC BAA-1333) protein is Methenyltetrahydromethanopterin cyclohydrolase.